Reading from the N-terminus, the 587-residue chain is Protein POF1B (587 aa).

Residues 331–529 are a coiled coil; it reads STFSNIREEL…EELSKLRQEI (199 aa).

As to quaternary structure, interacts with nonmuscle actin. Expression absent in adult ovary.

It is found in the cell junction. Its subcellular location is the tight junction. In terms of biological role, plays a key role in the organization of epithelial monolayers by regulating the actin cytoskeleton. May be involved in ovary development. The protein is Protein POF1B (Pof1b) of Mus musculus (Mouse).